The sequence spans 316 residues: HTH-type transcriptional regulator cbl (316 aa).

The 59-residue stretch at 1–59 (MNFQQLKIIREAARQDYNLTEVANMLYTSQSGVSRHIRELEEELGIEIFIRRGKRLLGM) folds into the HTH lysR-type domain. The H-T-H motif DNA-binding region spans 19 to 38 (LTEVANMLYTSQSGVSRHIR).

This sequence belongs to the LysR transcriptional regulatory family.

Its function is as follows. May be an accessory regulatory protein within the cys regulon. In Klebsiella aerogenes (Enterobacter aerogenes), this protein is HTH-type transcriptional regulator cbl (cbl).